The following is a 284-amino-acid chain: uncharacterized protein (284 aa).

An N-terminal signal peptide occupies residues 1–23; the sequence is MKRGCAIAVMICGLITSVSAASA.

Belongs to the surface antigen msp4 family.

This is an uncharacterized protein from Brucella suis biovar 1 (strain 1330).